We begin with the raw amino-acid sequence, 127 residues long: MHLAVTALCLTLAPVLARASTSCGLANISISVENEECGGCITFNTTACAGLCFTQDSVYKSSLKSYPQQACNFRDVVYETVHLPGCPSGMDLHFTYPVALSCECSKCNTDSTDCGPLNTEVSGCLTH.

Positions 1–22 are cleaved as a signal peptide; that stretch reads MHLAVTALCLTLAPVLARASTS. Disulfide bonds link Cys-23/Cys-71, Cys-37/Cys-86, Cys-40/Cys-124, Cys-48/Cys-102, Cys-52/Cys-104, and Cys-107/Cys-114. Residues Asn-27 and Asn-44 are each glycosylated (N-linked (GlcNAc...) asparagine).

The protein belongs to the glycoprotein hormones subunit beta family. As to quaternary structure, heterodimer of an alpha and a beta chain.

It is found in the secreted. In terms of biological role, involved in gametogenesis and steroidogenesis. The protein is Gonadotropin subunit beta-1 (cgba) of Anguilla japonica (Japanese eel).